The sequence spans 1024 residues: Multidrug resistance protein MdtC (1024 aa).

12 helical membrane-spanning segments follow: residues 12–32 (VATT…FSLL), 333–353 (EVER…FIFL), 360–380 (LIPA…MYLC), 387–407 (LSLM…IVVL), 435–455 (VLSM…MAGL), 469–489 (VAIG…CAWL), 528–548 (WVMV…ISIP), 853–873 (LWLI…LYES), 875–895 (VHPL…LLAL), 897–917 (LFDA…IGIV), 953–973 (PIIM…LSSG), and 984–1004 (ITIV…TPVI).

It belongs to the resistance-nodulation-cell division (RND) (TC 2.A.6) family. MdtC subfamily. Part of a tripartite efflux system composed of MdtA, MdtB and MdtC. MdtC forms a heteromultimer with MdtB.

Its subcellular location is the cell inner membrane. This Yersinia pseudotuberculosis serotype IB (strain PB1/+) protein is Multidrug resistance protein MdtC.